The following is a 347-amino-acid chain: NADH-ubiquinone oxidoreductase chain 2 (347 aa).

The next 11 helical transmembrane spans lie at 2 to 22 (LSPL…LVTF), 26 to 46 (SWIL…PLMA), 60 to 80 (YFIA…LAAW), 94 to 114 (IILN…PMHF), 127 to 147 (TGMI…IQIA), 151 to 171 (NNAF…WGGL), 179 to 197 (IIAY…MAPF), 201 to 223 (ITWV…LNTL), 242 to 262 (MLLL…GFTN), 274 to 294 (NLVI…FFYT), and 325 to 345 (LMTM…AIFI).

It belongs to the complex I subunit 2 family.

The protein localises to the mitochondrion inner membrane. It catalyses the reaction a ubiquinone + NADH + 5 H(+)(in) = a ubiquinol + NAD(+) + 4 H(+)(out). In terms of biological role, core subunit of the mitochondrial membrane respiratory chain NADH dehydrogenase (Complex I) that is believed to belong to the minimal assembly required for catalysis. Complex I functions in the transfer of electrons from NADH to the respiratory chain. The immediate electron acceptor for the enzyme is believed to be ubiquinone. The chain is NADH-ubiquinone oxidoreductase chain 2 (MT-ND2) from Lampetra fluviatilis (European river lamprey).